The primary structure comprises 623 residues: Glutamine--fructose-6-phosphate aminotransferase [isomerizing] (623 aa).

Residue Cys2 is the Nucleophile; for GATase activity of the active site. In terms of domain architecture, Glutamine amidotransferase type-2 spans 2–228 (CGIVGYIGQA…NDQVVTITAD (227 aa)). 2 SIS domains span residues 295–435 (IDES…LRGN) and 468–613 (LGRS…VDQP). The For Fru-6P isomerization activity role is filled by Lys618.

In terms of assembly, homodimer.

Its subcellular location is the cytoplasm. The catalysed reaction is D-fructose 6-phosphate + L-glutamine = D-glucosamine 6-phosphate + L-glutamate. Its function is as follows. Catalyzes the first step in hexosamine metabolism, converting fructose-6P into glucosamine-6P using glutamine as a nitrogen source. In Corynebacterium efficiens (strain DSM 44549 / YS-314 / AJ 12310 / JCM 11189 / NBRC 100395), this protein is Glutamine--fructose-6-phosphate aminotransferase [isomerizing].